Reading from the N-terminus, the 92-residue chain is Trp operon repressor homolog (92 aa).

Residues 56 to 79 (QREVASKLGVSITKITRGAANLQD) mediate DNA binding.

Belongs to the TrpR family. In terms of assembly, homodimer.

The protein localises to the cytoplasm. Its function is as follows. This protein is an aporepressor. When complexed with L-tryptophan it binds the operator region of the trp operon and prevents the initiation of transcription. This is Trp operon repressor homolog from Xylella fastidiosa (strain M23).